We begin with the raw amino-acid sequence, 224 residues long: Metalloproteinase inhibitor 4 (224 aa).

A signal peptide spans 1 to 29 (MPQSPRPVPSWALLLRLLALLRPPGLGEA). Cys30 provides a ligand contact to Zn(2+). 2 involved in metalloproteinase-binding regions span residues 30–33 (CSCA) and 99–100 (SS). 6 disulfide bridges follow: Cys30–Cys102, Cys32–Cys131, Cys42–Cys156, Cys158–Cys205, Cys163–Cys168, and Cys176–Cys197. The NTR domain maps to 30–156 (CSCAPAHPQQ…SLNHHYHLNC (127 aa)).

It belongs to the protease inhibitor I35 (TIMP) family.

The protein localises to the secreted. Functionally, complexes with metalloproteinases (such as collagenases) and irreversibly inactivates them by binding to their catalytic zinc cofactor. The chain is Metalloproteinase inhibitor 4 (TIMP4) from Bos taurus (Bovine).